A 505-amino-acid polypeptide reads, in one-letter code: Cyclin-dependent kinase C-1 (505 aa).

Residues Phe26 to Phe325 form the Protein kinase domain. ATP is bound by residues Ile32 to Val40 and Lys55. Tyr37 is subject to Phosphotyrosine. The Proton acceptor role is filled by Asp164. Thr198 bears the Phosphothreonine mark. The segment at Ser336–Gln505 is disordered. A compositionally biased stretch (low complexity) spans Pro429–Gly456. The span at Gly482–Gly491 shows a compositional bias: gly residues. The segment covering Arg492–Gln505 has biased composition (low complexity).

This sequence belongs to the protein kinase superfamily. CMGC Ser/Thr protein kinase family. CDC2/CDKX subfamily. Interacts with CYCT1-3. Highly expressed in flowers. Expressed in seedlings, roots, rosettes and stems.

It carries out the reaction L-seryl-[protein] + ATP = O-phospho-L-seryl-[protein] + ADP + H(+). The enzyme catalyses L-threonyl-[protein] + ATP = O-phospho-L-threonyl-[protein] + ADP + H(+). It catalyses the reaction [DNA-directed RNA polymerase] + ATP = phospho-[DNA-directed RNA polymerase] + ADP + H(+). The polypeptide is Cyclin-dependent kinase C-1 (CDKC-1) (Arabidopsis thaliana (Mouse-ear cress)).